The following is a 380-amino-acid chain: Ceramide-binding protein svf1 (380 aa).

Residues 1–18 are peripherally associates with membranes; it reads MKAWLQSSISYYTGTAEP.

The protein belongs to the SVF1 family.

It localises to the golgi apparatus. It is found in the cis-Golgi network membrane. The protein resides in the endoplasmic reticulum membrane. Its subcellular location is the cytoplasm. The protein localises to the nucleus. Its function is as follows. Ceramide-binding protein that may transfer ceramides from the endoplasmic reticulum membrane to the cis-Golgi network membrane, and is thereby required for the biosynthesis of complex sphingolipids. This Schizosaccharomyces pombe (strain 972 / ATCC 24843) (Fission yeast) protein is Ceramide-binding protein svf1.